The following is an 803-amino-acid chain: Mastermind-like domain-containing protein 1 (803 aa).

Disordered regions lie at residues 22–50, 292–374, 420–452, and 486–641; these read NRQE…TGMA, LAAS…APSS, GHLI…QQSF, and QQQQ…PDQS. Polar residues predominate over residues 296-309; sequence KQGSATKQGSNRNW. A compositionally biased stretch (pro residues) spans 312 to 340; it reads LPPPGLSPPYLPVPSPHPPPPQPPPPPFS. Low complexity predominate over residues 347–362; that stretch reads SCMSSSSLSGSAVQSS. Polar residues-rich tracts occupy residues 363-374, 441-452, 495-526, and 547-564; these read PNALLSSMAPSS, NLSSPGLPQQSF, HQAN…SSSP, and PSPQ…QSSL. Low complexity predominate over residues 571–588; sequence ATPAHAPSATASSTATAT. Residues 592 to 622 show a composition bias toward basic residues; that stretch reads QHHHQQHHHQQHHHQQQHHQQQHHQQHHHQQ. The segment covering 623-641 has biased composition (low complexity); the sequence is QQHQQQQHQQQQQQQPDQS.

It belongs to the mastermind family.

The protein localises to the nucleus. Transactivates the HES3 promoter independently of NOTCH proteins. HES3 is a non-canonical NOTCH target gene which lacks binding sites for RBPJ. Required for testosterone production. This is Mastermind-like domain-containing protein 1 (Mamld1) from Mus musculus (Mouse).